The sequence spans 172 residues: Large ribosomal subunit protein uL10 (172 aa).

It belongs to the universal ribosomal protein uL10 family. Part of the ribosomal stalk of the 50S ribosomal subunit. The N-terminus interacts with L11 and the large rRNA to form the base of the stalk. The C-terminus forms an elongated spine to which L12 dimers bind in a sequential fashion forming a multimeric L10(L12)X complex.

Forms part of the ribosomal stalk, playing a central role in the interaction of the ribosome with GTP-bound translation factors. This chain is Large ribosomal subunit protein uL10, found in Xanthobacter autotrophicus (strain ATCC BAA-1158 / Py2).